We begin with the raw amino-acid sequence, 246 residues long: Transcriptional regulatory protein LytR (246 aa).

The region spanning 2 to 116 is the Response regulatory domain; it reads KALIIDDEPL…RIEQAVNKVR (115 aa). Asp53 carries the 4-aspartylphosphate modification. The HTH LytTR-type domain occupies 141-245; sequence LPVEIDDKIH…MKDFKASIGL (105 aa).

Homodimer; when phosphorylated. Post-translationally, phosphorylated and dephosphorylated by LytS.

It localises to the cytoplasm. Its function is as follows. Member of the two-component regulatory system LytR/LytS that regulates genes involved in autolysis, programmed cell death, biofilm formation and cell wall metabolism. Also participates in sensing and responding to host defense cationic antimicrobial peptides (HDPs). Upon phosphorylation by LytS, functions as a transcription regulator by direct binding to promoter regions of target genes including lrgA and lrgB, to positively regulate their expression. The chain is Transcriptional regulatory protein LytR (lytR) from Staphylococcus aureus (strain USA300).